A 94-amino-acid polypeptide reads, in one-letter code: Acylphosphatase (94 aa).

One can recognise an Acylphosphatase-like domain in the interval 8–94; that stretch reads ALHVIVKGRV…RGYTDFRIEV (87 aa). Catalysis depends on residues R23 and N41.

This sequence belongs to the acylphosphatase family.

The catalysed reaction is an acyl phosphate + H2O = a carboxylate + phosphate + H(+). The polypeptide is Acylphosphatase (acyP) (Treponema denticola (strain ATCC 35405 / DSM 14222 / CIP 103919 / JCM 8153 / KCTC 15104)).